Reading from the N-terminus, the 59-residue chain is Cecropin-A2 (59 aa).

An N-terminal signal peptide occupies residues 1 to 23 (MNFNKLFAIVLLAALVLLGQTEA).

This sequence belongs to the cecropin family.

The protein resides in the secreted. In terms of biological role, cecropins have lytic and antibacterial activity against several Gram-positive and Gram-negative bacteria. The polypeptide is Cecropin-A2 (CECA2) (Aedes albopictus (Asian tiger mosquito)).